The primary structure comprises 272 residues: Dermonecrotic toxin LvSicTox-alphaIC1bii (272 aa).

Residue H5 is part of the active site. Mg(2+)-binding residues include E25 and D27. H41 (nucleophile) is an active-site residue. 2 cysteine pairs are disulfide-bonded: C45-C51 and C47-C189. D84 provides a ligand contact to Mg(2+).

This sequence belongs to the arthropod phospholipase D family. Class II subfamily. Mg(2+) is required as a cofactor. In terms of tissue distribution, expressed by the venom gland.

The protein resides in the secreted. The catalysed reaction is an N-(acyl)-sphingosylphosphocholine = an N-(acyl)-sphingosyl-1,3-cyclic phosphate + choline. The enzyme catalyses an N-(acyl)-sphingosylphosphoethanolamine = an N-(acyl)-sphingosyl-1,3-cyclic phosphate + ethanolamine. It catalyses the reaction a 1-acyl-sn-glycero-3-phosphocholine = a 1-acyl-sn-glycero-2,3-cyclic phosphate + choline. It carries out the reaction a 1-acyl-sn-glycero-3-phosphoethanolamine = a 1-acyl-sn-glycero-2,3-cyclic phosphate + ethanolamine. Functionally, dermonecrotic toxins cleave the phosphodiester linkage between the phosphate and headgroup of certain phospholipids (sphingolipid and lysolipid substrates), forming an alcohol (often choline) and a cyclic phosphate. This toxin acts on sphingomyelin (SM). It may also act on ceramide phosphoethanolamine (CPE), lysophosphatidylcholine (LPC) and lysophosphatidylethanolamine (LPE), but not on lysophosphatidylserine (LPS), and lysophosphatidylglycerol (LPG). It acts by transphosphatidylation, releasing exclusively cyclic phosphate products as second products. Induces dermonecrosis, hemolysis, increased vascular permeability, edema, inflammatory response, and platelet aggregation. The protein is Dermonecrotic toxin LvSicTox-alphaIC1bii of Loxosceles variegata (Recluse spider).